A 366-amino-acid chain; its full sequence is MAGNTFGQLFTVTTFGESHGAGLGCIIDGCPPGLELSEADIQFDLDRRKPGTSRHVTQRRETDQVEILSGVFKGKTTGTPIALLIRNTDQRSKDYGNIAQSFRPGHADYTYWHKYGTRDYRGGGRSSARETAARVAAGAVAKKWLKEKFGTEITAYVTQVGEKEIRFEGCEHISQNPFFAANHSQIAELENYMDSVRKSLDSVGAKLHIEAANVPVGLGEPVFDRLDAEIAYAMMGINAVKGVEIGAGFDSVTQRGSEHGDELTPQGFLSNHSGGILGGISTGQDICVNIAIKPTSSIATPRRSIDINGNPIELATHGRHDPCVGLRAAPIAEAMLALVLIDHALRHRAQNADVAVDTPDIARSDK.

2 residues coordinate NADP(+): arginine 48 and arginine 54. FMN-binding positions include 125 to 127 (RSS), 238 to 239 (NA), glycine 278, 293 to 297 (KPTSS), and arginine 319.

This sequence belongs to the chorismate synthase family. Homotetramer. FMNH2 serves as cofactor.

The catalysed reaction is 5-O-(1-carboxyvinyl)-3-phosphoshikimate = chorismate + phosphate. The protein operates within metabolic intermediate biosynthesis; chorismate biosynthesis; chorismate from D-erythrose 4-phosphate and phosphoenolpyruvate: step 7/7. Its function is as follows. Catalyzes the anti-1,4-elimination of the C-3 phosphate and the C-6 proR hydrogen from 5-enolpyruvylshikimate-3-phosphate (EPSP) to yield chorismate, which is the branch point compound that serves as the starting substrate for the three terminal pathways of aromatic amino acid biosynthesis. This reaction introduces a second double bond into the aromatic ring system. The chain is Chorismate synthase from Neisseria meningitidis serogroup C / serotype 2a (strain ATCC 700532 / DSM 15464 / FAM18).